The following is a 507-amino-acid chain: ATP synthase subunit alpha (507 aa).

170–177 (GDRQTGKT) contacts ATP.

Belongs to the ATPase alpha/beta chains family. F-type ATPases have 2 components, CF(1) - the catalytic core - and CF(0) - the membrane proton channel. CF(1) has five subunits: alpha(3), beta(3), gamma(1), delta(1), epsilon(1). CF(0) has three main subunits: a(1), b(2) and c(9-12). The alpha and beta chains form an alternating ring which encloses part of the gamma chain. CF(1) is attached to CF(0) by a central stalk formed by the gamma and epsilon chains, while a peripheral stalk is formed by the delta and b chains.

It is found in the cell inner membrane. It carries out the reaction ATP + H2O + 4 H(+)(in) = ADP + phosphate + 5 H(+)(out). Its function is as follows. Produces ATP from ADP in the presence of a proton gradient across the membrane. The alpha chain is a regulatory subunit. This Fervidobacterium nodosum (strain ATCC 35602 / DSM 5306 / Rt17-B1) protein is ATP synthase subunit alpha.